Consider the following 213-residue polypeptide: ER lumen protein-retaining receptor (213 aa).

The Lumenal portion of the chain corresponds to 1 to 2 (MN). The chain crosses the membrane as a helical span at residues 3–21 (IFRITADLAHAVAIVILLL). At 22-35 (KIWKSRSCEGISGR) the chain is on the cytoplasmic side. Residues 36 to 53 (SQILFAVTFFTRYLDLFT) form a helical membrane-spanning segment. Residues 54 to 61 (SFYSLYNT) lie on the Lumenal side of the membrane. Residues 62 to 80 (VMKVLFLAGSIGTVYLMWV) form a helical membrane-spanning segment. The Cytoplasmic segment spans residues 81 to 96 (KFKATYDRNNDTFRIE). The chain crosses the membrane as a helical span at residues 97–110 (FLVIPSIILALIIN). The Lumenal portion of the chain corresponds to 111 to 117 (HEFMFME). Residues 118–137 (VMWTFSIYLEAVAIMPQLFM) form a helical membrane-spanning segment. The Cytoplasmic segment spans residues 138–149 (LSRTGNAETITA). Residues 150–168 (HYLFALGSYRFLYIFNWVY) traverse the membrane as a helical segment. Over 169 to 178 (RYYTESFFDP) the chain is Lumenal. The chain crosses the membrane as a helical span at residues 179 to 199 (IAVVAGIVQTVLYADFFYLYI). The Cytoplasmic portion of the chain corresponds to 200 to 213 (TRVIQSNRQFEMSA).

This sequence belongs to the ERD2 family.

The protein localises to the endoplasmic reticulum membrane. In terms of biological role, required for the retention of luminal endoplasmic reticulum proteins. Determines the specificity of the luminal ER protein retention system. Also required for normal vesicular traffic through the Golgi. The protein is ER lumen protein-retaining receptor (erd-2.1) of Caenorhabditis briggsae.